The primary structure comprises 500 residues: Protein PIGMENT DEFECTIVE 338, chloroplastic (500 aa).

The N-terminal 63 residues, methionine 1 to arginine 63, are a transit peptide targeting the chloroplast. S1 motif domains follow at residues lysine 156 to arginine 265, asparagine 283 to lysine 351, and glycine 362 to alanine 431.

This sequence belongs to the bacterial ribosomal protein bS1 family. In terms of assembly, interacts with CRP1 and PRFB3. In terms of tissue distribution, present in leaves (at protein level). Confined to leaf chlorenchyma cells.

Its subcellular location is the plastid. The protein resides in the chloroplast. In terms of biological role, RNA-binding protein that acts as an RNA chaperone to remodel RNA structure and activates their translation. Required for seed pigmentation. Necessary for chloroplast development and subsequent photosynthetic electron flow, as well as for non-photochemical quenching (NPQ). Rubisco regulatory factor which regulates the concerted biogenesis of NDH, PSI (including PsaA, PsaB, PsaD, PsaF, PsaL, PsaG, PsaK and NdhH) and Cytb(6)f (including PetA, PetB, PetC and PetD) complexes. Binds specifically to and involved in the post-transcriptional regulation of plastid-encoded mRNAs (e.g. rbcL, petA, petB, petD and Ycf1), thus modulating expression, cellular localization/compartmentalization, and photosynthetic function. This Arabidopsis thaliana (Mouse-ear cress) protein is Protein PIGMENT DEFECTIVE 338, chloroplastic.